Consider the following 244-residue polypeptide: MRILVTNDDGIYSPGLWALAEAASQFGEVFVAAPDTEQSAAGHAITIAHPVRAYPHPSPLHAPHFPAYRVRGTPADCVALGLHLFGPVDLVLSGVNLGSNLGHEIWHSGTVAAAKQGYLFGLSAAAFSVPLNGEVPDFAGLRPWLLRTLETLLRLERPFLVNVNLPLRPKGFLWTRQSVRAYEGVVIPGEDPMGRPFYWFAPRPLKEAEEGTDRWAVAQGFVSATPLRLDLTDETRLQPTLAHD.

Residues Asp8, Asp9, Ser39, and Asn96 each coordinate a divalent metal cation.

This sequence belongs to the SurE nucleotidase family. Requires a divalent metal cation as cofactor.

The protein resides in the cytoplasm. It carries out the reaction a ribonucleoside 5'-phosphate + H2O = a ribonucleoside + phosphate. Functionally, nucleotidase that shows phosphatase activity on nucleoside 5'-monophosphates. The chain is 5'-nucleotidase SurE from Thermus thermophilus (strain ATCC 27634 / DSM 579 / HB8).